Reading from the N-terminus, the 945-residue chain is Isoleucine--tRNA ligase (945 aa).

The 'HIGH' region signature appears at 66-76; sequence PYANGDIHLGH. L-isoleucyl-5'-AMP is bound at residue Glu581. The short motif at 622–626 is the 'KMSKS' region element; the sequence is KMSKS. Residue Lys625 participates in ATP binding. Zn(2+)-binding residues include Cys908, Cys911, Cys928, and Cys931.

It belongs to the class-I aminoacyl-tRNA synthetase family. IleS type 1 subfamily. Monomer. Requires Zn(2+) as cofactor.

It is found in the cytoplasm. It carries out the reaction tRNA(Ile) + L-isoleucine + ATP = L-isoleucyl-tRNA(Ile) + AMP + diphosphate. Catalyzes the attachment of isoleucine to tRNA(Ile). As IleRS can inadvertently accommodate and process structurally similar amino acids such as valine, to avoid such errors it has two additional distinct tRNA(Ile)-dependent editing activities. One activity is designated as 'pretransfer' editing and involves the hydrolysis of activated Val-AMP. The other activity is designated 'posttransfer' editing and involves deacylation of mischarged Val-tRNA(Ile). The protein is Isoleucine--tRNA ligase of Burkholderia orbicola (strain MC0-3).